The sequence spans 470 residues: Ras-like GTPase HI_1637 (470 aa).

The Walker A motif signature appears at 27-34; it reads GLSRSGKT. 12 residues coordinate GTP: Ser-29, Gly-32, Lys-33, Thr-34, Ala-35, Trp-98, Ser-101, Thr-102, Arg-103, Lys-342, Asp-344, and His-345. GDP-binding residues include Gly-32, Lys-33, Thr-34, Ala-35, Trp-98, Ser-101, and Thr-102. 5 residues coordinate GDP: Lys-342, Asp-344, His-345, Ala-383, and Val-384. Residue Val-384 coordinates GTP.

This sequence to E.coli YcjX. Monomer in solution. Requires Mg(2+) as cofactor.

The catalysed reaction is GTP + H2O = GDP + phosphate + H(+). With respect to regulation, alternates between an inactive form bound to GDP and an active form bound to GTP. Likely activated by a guanine nucleotide-exchange factor (GEF). In terms of biological role, binds GTP and GDP. Has intrinsic GTPase activity. Does not hydrolyze ATP. May act as a transducer of stress responses. This chain is Ras-like GTPase HI_1637, found in Haemophilus influenzae (strain ATCC 51907 / DSM 11121 / KW20 / Rd).